The following is an 82-amino-acid chain: uncharacterized protein (82 aa).

The protein belongs to the chlamydial CPn_0711/CT_665/TC_0036 family.

This is an uncharacterized protein from Chlamydia pneumoniae (Chlamydophila pneumoniae).